The chain runs to 816 residues: Phosphatidylinositol 4-kinase beta (816 aa).

Disordered regions lie at residues 1 to 30, 99 to 120, and 248 to 318; these read MGDTVVEPAPLKPTSEPTSGPPGNNGGSLL, EEEDEMGASVASGTAKGARRRR, and AHRK…SFSS. Gly2 bears the N-acetylglycine mark. The interaction with ACBD3 stretch occupies residues 2 to 68; that stretch reads GDTVVEPAPL…VKLLHGGVAV (67 aa). Residues 52-242 form the PIK helical domain; sequence CQDVLEKVKL…GTKLRKLILS (191 aa). At Ser258 the chain carries Phosphoserine. Position 263 is a phosphothreonine (Thr263). Phosphoserine is present on residues Ser266, Ser275, Ser277, Ser284, and Ser294. Composition is skewed to polar residues over residues 278–297 and 306–318; these read DATASISLSSNLKRTASNPK and SSSTESIDNSFSS. Position 428 is a phosphoserine (Ser428). Thr438 is subject to Phosphothreonine. Ser511 is subject to Phosphoserine. A phosphothreonine mark is found at Thr517 and Thr519. Residues 535-801 form the PI3K/PI4K catalytic domain; sequence EPWQEKVRRI…MVDGSMRSIT (267 aa). Residues 541 to 547 are G-loop; it reads VRRIREG. The segment at 668–676 is catalytic loop; sequence QVKDRHNGN. The tract at residues 687–711 is activation loop; sequence HIDFGFILSSSPRNLGFETSAFKLT.

The protein belongs to the PI3/PI4-kinase family. Type III PI4K subfamily. In terms of assembly, interacts with ARF1 and ARF3 in the Golgi complex, but not with ARF4, ARF5 or ARF6. Interacts with NCS1/FREQ in a calcium-independent manner. Interacts with CALN1/CABP8 and CALN2/CABP7; in a calcium-dependent manner; this interaction competes with NCS1/FREQ binding. Interacts with ACBD3. Interacts with ARMH3, YWHAB, YWHAE, YWHAG, YWHAH, YWHAQ, YWHAZ and SFN. Interacts with GGA2 (via VHS domain); the interaction is important for PI4KB location at the Golgi apparatus membrane. Interacts with ATG9A. Mg(2+) serves as cofactor. The cofactor is Mn(2+).

The protein localises to the endomembrane system. It localises to the mitochondrion outer membrane. The protein resides in the rough endoplasmic reticulum membrane. Its subcellular location is the golgi apparatus. It is found in the golgi apparatus membrane. The enzyme catalyses a 1,2-diacyl-sn-glycero-3-phospho-(1D-myo-inositol) + ATP = a 1,2-diacyl-sn-glycero-3-phospho-(1D-myo-inositol 4-phosphate) + ADP + H(+). Its activity is regulated as follows. Inhibited by wortmannin. Increased kinase activity upon interaction with NCS1/FREQ. Phosphorylates phosphatidylinositol (PI) in the first committed step in the production of the second messenger inositol-1,4,5,-trisphosphate (PIP). May regulate Golgi disintegration/reorganization during mitosis, possibly via its phosphorylation. Involved in Golgi-to-plasma membrane trafficking. This Callithrix jacchus (White-tufted-ear marmoset) protein is Phosphatidylinositol 4-kinase beta (PI4KB).